The sequence spans 219 residues: MLIHLQKVCPSEQVDHLRDLIGQGGFVDGGTTAGQVARAVKANEQLEAGARVDTVRSEVRKALMAHAGFVSFARPKTLSRILVSRYRDGMAYGPHIDDALMGGRRADLSFTLFLSDPDSYDGGELVMDGPDGETEIKLAAGDAVVYATSAIHQVAPVTRGERVAVVGWVRSLVRRPDQREILFDLDQVSAALFARDGKTRELDLVLKTKANLLRQWAED.

The Fe2OG dioxygenase domain maps to 77–171 (TLSRILVSRY…RVAVVGWVRS (95 aa)). Fe cation contacts are provided by histidine 95, aspartate 97, and histidine 152. Arginine 162 contributes to the 2-oxoglutarate binding site.

Requires Fe(2+) as cofactor. The cofactor is L-ascorbate.

The protein is PKHD-type hydroxylase Mmar10_1675 of Maricaulis maris (strain MCS10) (Caulobacter maris).